We begin with the raw amino-acid sequence, 391 residues long: Phosphoglycerate kinase (391 aa).

Residues 21–23, R36, 59–62, R113, and R146 each bind substrate; these read DLN and HLGR. ATP is bound by residues K197, E319, and 345 to 348; that span reads GGDT.

It belongs to the phosphoglycerate kinase family. Monomer.

The protein localises to the cytoplasm. It carries out the reaction (2R)-3-phosphoglycerate + ATP = (2R)-3-phospho-glyceroyl phosphate + ADP. It functions in the pathway carbohydrate degradation; glycolysis; pyruvate from D-glyceraldehyde 3-phosphate: step 2/5. This Colwellia psychrerythraea (strain 34H / ATCC BAA-681) (Vibrio psychroerythus) protein is Phosphoglycerate kinase.